A 240-amino-acid polypeptide reads, in one-letter code: Methylthioribulose-1-phosphate dehydratase (240 aa).

A compositionally biased stretch (polar residues) spans 1–17; it reads MAQEVENNNNDHLVQSS. The interval 1–20 is disordered; the sequence is MAQEVENNNNDHLVQSSDPE. Cys-100 lines the substrate pocket. Residues His-117 and His-119 each contribute to the Zn(2+) site. The active-site Proton donor/acceptor is Glu-146. His-202 contributes to the Zn(2+) binding site.

The protein belongs to the aldolase class II family. MtnB subfamily. The cofactor is Zn(2+).

It is found in the cytoplasm. It carries out the reaction 5-(methylsulfanyl)-D-ribulose 1-phosphate = 5-methylsulfanyl-2,3-dioxopentyl phosphate + H2O. It participates in amino-acid biosynthesis; L-methionine biosynthesis via salvage pathway; L-methionine from S-methyl-5-thio-alpha-D-ribose 1-phosphate: step 2/6. Its function is as follows. Catalyzes the dehydration of methylthioribulose-1-phosphate (MTRu-1-P) into 2,3-diketo-5-methylthiopentyl-1-phosphate (DK-MTP-1-P). This Neosartorya fischeri (strain ATCC 1020 / DSM 3700 / CBS 544.65 / FGSC A1164 / JCM 1740 / NRRL 181 / WB 181) (Aspergillus fischerianus) protein is Methylthioribulose-1-phosphate dehydratase.